Reading from the N-terminus, the 507-residue chain is 3-octaprenyl-4-hydroxybenzoate carboxy-lyase (507 aa).

Asparagine 177 contributes to the Mn(2+) binding site. Prenylated FMN contacts are provided by residues 180–182 (IYR), 194–196 (RWL), and 199–200 (RG). A Mn(2+)-binding site is contributed by glutamate 243. Aspartate 302 serves as the catalytic Proton donor.

This sequence belongs to the UbiD family. As to quaternary structure, homohexamer. Prenylated FMN is required as a cofactor. Requires Mn(2+) as cofactor.

It localises to the cell membrane. The catalysed reaction is a 4-hydroxy-3-(all-trans-polyprenyl)benzoate + H(+) = a 2-(all-trans-polyprenyl)phenol + CO2. It participates in cofactor biosynthesis; ubiquinone biosynthesis. Catalyzes the decarboxylation of 3-octaprenyl-4-hydroxy benzoate to 2-octaprenylphenol, an intermediate step in ubiquinone biosynthesis. This Cupriavidus metallidurans (strain ATCC 43123 / DSM 2839 / NBRC 102507 / CH34) (Ralstonia metallidurans) protein is 3-octaprenyl-4-hydroxybenzoate carboxy-lyase.